The primary structure comprises 40 residues: Mu-thomitoxin-Hme1b (40 aa).

Cystine bridges form between cysteine 2–cysteine 18, cysteine 9–cysteine 22, and cysteine 17–cysteine 33.

This sequence belongs to the neurotoxin 19 (CSTX) family. In terms of processing, contains 3 disulfide bonds. In terms of tissue distribution, expressed by the venom gland.

The protein resides in the secreted. Blocks the Nav1.2/SCN2A, Nav1.4/SCN4A, Nav1.5/SCN5A and Nav1.6/SCN8A sodium channels. Shows a slight preference for the Nav1.2 and Nav1.4 channels. Reduces the peak amplitude of the sodium current and negatively shifts the steady-state inactivation process. Does not shift the threshold potential of activation or the voltage corresponding to maximal current. Does not change the reversal potential of the sodium current. May act on site 1 of the receptor. This chain is Mu-thomitoxin-Hme1b, found in Heriaeus mellotteei (Crab spider).